A 954-amino-acid chain; its full sequence is Mycolic acid-containing lipids exporter MmpL11 (954 aa).

The next 12 membrane-spanning stretches (helical) occupy residues 11 to 31 (FRWA…YLAL), 188 to 208 (IVLI…LPLV), 214 to 234 (VVVT…SVFV), 235 to 255 (TSTV…FILM), 279 to 299 (GLAV…IYLI), 312 to 334 (ILAV…ATFG), 373 to 393 (AIAA…MVLG), 529 to 549 (TQPL…LVSI), 559 to 579 (VLMT…VFQW), 597 to 617 (IPPL…IFLL), 648 to 668 (AALI…PLVA), and 670 to 690 (LGVA…LVLV).

It is found in the cell inner membrane. Functionally, contributes to cell wall biosynthesis and biofilm formation. Transports the mycolic acid-containing lipids monomeromycolyl diacylglycerol (MMDAG) and mycolate ester wax (WE) to the bacterial surface. The protein is Mycolic acid-containing lipids exporter MmpL11 of Mycolicibacterium smegmatis (strain ATCC 700084 / mc(2)155) (Mycobacterium smegmatis).